We begin with the raw amino-acid sequence, 343 residues long: Probable dual-specificity RNA methyltransferase RlmN (343 aa).

The active-site Proton acceptor is Glu91. In terms of domain architecture, Radical SAM core spans 97–326 (HPDRITACIS…AEIRREKGSD (230 aa)). Cysteines 104 and 331 form a disulfide. Residues Cys111, Cys115, and Cys118 each coordinate [4Fe-4S] cluster. Residues 158–159 (GE), Ser190, 213–215 (SLH), and Asn289 each bind S-adenosyl-L-methionine. The active-site S-methylcysteine intermediate is Cys331.

This sequence belongs to the radical SAM superfamily. RlmN family. [4Fe-4S] cluster is required as a cofactor.

It is found in the cytoplasm. It carries out the reaction adenosine(2503) in 23S rRNA + 2 reduced [2Fe-2S]-[ferredoxin] + 2 S-adenosyl-L-methionine = 2-methyladenosine(2503) in 23S rRNA + 5'-deoxyadenosine + L-methionine + 2 oxidized [2Fe-2S]-[ferredoxin] + S-adenosyl-L-homocysteine. The enzyme catalyses adenosine(37) in tRNA + 2 reduced [2Fe-2S]-[ferredoxin] + 2 S-adenosyl-L-methionine = 2-methyladenosine(37) in tRNA + 5'-deoxyadenosine + L-methionine + 2 oxidized [2Fe-2S]-[ferredoxin] + S-adenosyl-L-homocysteine. Functionally, specifically methylates position 2 of adenine 2503 in 23S rRNA and position 2 of adenine 37 in tRNAs. This Thermotoga sp. (strain RQ2) protein is Probable dual-specificity RNA methyltransferase RlmN.